Here is a 477-residue protein sequence, read N- to C-terminus: Diphthine methyltransferase (477 aa).

3 WD repeats span residues histidine 194 to phenylalanine 232, arginine 236 to alanine 276, and valine 422 to leucine 464.

It belongs to the DPH7 family. Interacts with INCA1.

The enzyme catalyses diphthine methyl ester-[translation elongation factor 2] + H2O = diphthine-[translation elongation factor 2] + methanol + H(+). The protein operates within protein modification; peptidyl-diphthamide biosynthesis. In terms of biological role, catalyzes the demethylation of diphthine methyl ester to form diphthine, an intermediate diphthamide biosynthesis, a post-translational modification of histidine which occurs in translation elongation factor 2 (EEF2). The sequence is that of Diphthine methyltransferase (Dph7) from Mus musculus (Mouse).